Reading from the N-terminus, the 389-residue chain is 23S rRNA (uracil(747)-C(5))-methyltransferase RlmC (389 aa).

[4Fe-4S] cluster is bound by residues C12, C20, C23, and C99. S-adenosyl-L-methionine is bound by residues Q224, F253, E274, and N321. The active-site Nucleophile is C348.

The protein belongs to the class I-like SAM-binding methyltransferase superfamily. RNA M5U methyltransferase family. RlmC subfamily.

It catalyses the reaction uridine(747) in 23S rRNA + S-adenosyl-L-methionine = 5-methyluridine(747) in 23S rRNA + S-adenosyl-L-homocysteine + H(+). In terms of biological role, catalyzes the formation of 5-methyl-uridine at position 747 (m5U747) in 23S rRNA. The polypeptide is 23S rRNA (uracil(747)-C(5))-methyltransferase RlmC (Shewanella sp. (strain W3-18-1)).